Reading from the N-terminus, the 452-residue chain is MLNPYEIMETIRMIEEEKLDIRTITMGISLRDCAHPSGEVARKNIYDKILRYAGNLVEVARDIELEYGIPIINKRIAVTPISLVAESSSEEDFIKFAETLDKAAGEVGVDFIGGFSALVHKGFTTGDKKLINSIPRALANTERVCSSINVATTRAGINMEAVSRMGKIIKKTARETRDKGGLGCAKLVVFANVPEDNPFMAGAFHGIGEPECVINVGISGPGAVKAALKKVKGQKFDTVAETIKKTAFKITRAGQLVAREASKRLNVPFGIVDLSLAPTPAVGDSVAEILEEMGLESCGAPGTTAALALLNDAVKKGGTMASSHVGGLSGAFIPVSEDAGMIKAVKRGSLNLEKLEAMTCVCSVGLDMIAVPGSTKADTISAVIADEVAIGVINNKTTAVRIIPVPGKDVGDEVEFGGLLGTAPVMDVSKFSSSAFIGRGGRIPAPIHSLKN.

It belongs to the UPF0210 family. Homodimer.

The polypeptide is UPF0210 protein Hore_14430 (Halothermothrix orenii (strain H 168 / OCM 544 / DSM 9562)).